Consider the following 194-residue polypeptide: Crossover junction endodeoxyribonuclease RuvC (194 aa).

Active-site residues include Asp-7, Glu-68, and Asp-141. Residues Asp-7, Glu-68, and Asp-141 each coordinate Mg(2+).

It belongs to the RuvC family. In terms of assembly, homodimer which binds Holliday junction (HJ) DNA. The HJ becomes 2-fold symmetrical on binding to RuvC with unstacked arms; it has a different conformation from HJ DNA in complex with RuvA. In the full resolvosome a probable DNA-RuvA(4)-RuvB(12)-RuvC(2) complex forms which resolves the HJ. Mg(2+) is required as a cofactor.

The protein resides in the cytoplasm. The catalysed reaction is Endonucleolytic cleavage at a junction such as a reciprocal single-stranded crossover between two homologous DNA duplexes (Holliday junction).. Its function is as follows. The RuvA-RuvB-RuvC complex processes Holliday junction (HJ) DNA during genetic recombination and DNA repair. Endonuclease that resolves HJ intermediates. Cleaves cruciform DNA by making single-stranded nicks across the HJ at symmetrical positions within the homologous arms, yielding a 5'-phosphate and a 3'-hydroxyl group; requires a central core of homology in the junction. The consensus cleavage sequence is 5'-(A/T)TT(C/G)-3'. Cleavage occurs on the 3'-side of the TT dinucleotide at the point of strand exchange. HJ branch migration catalyzed by RuvA-RuvB allows RuvC to scan DNA until it finds its consensus sequence, where it cleaves and resolves the cruciform DNA. In Bifidobacterium longum (strain DJO10A), this protein is Crossover junction endodeoxyribonuclease RuvC.